The sequence spans 164 residues: UPF0114 protein Sbal_0780 (164 aa).

4 consecutive transmembrane segments (helical) span residues 15-35 (IMAP…VKFF), 53-73 (LVLL…IVMV), 109-129 (VAAS…MNAE), and 136-156 (IMWY…MGYL).

This sequence belongs to the UPF0114 family.

The protein localises to the cell membrane. The sequence is that of UPF0114 protein Sbal_0780 from Shewanella baltica (strain OS155 / ATCC BAA-1091).